We begin with the raw amino-acid sequence, 122 residues long: Large ribosomal subunit protein uL14 (122 aa).

The protein belongs to the universal ribosomal protein uL14 family. As to quaternary structure, part of the 50S ribosomal subunit. Forms a cluster with proteins L3 and L19. In the 70S ribosome, L14 and L19 interact and together make contacts with the 16S rRNA in bridges B5 and B8.

In terms of biological role, binds to 23S rRNA. Forms part of two intersubunit bridges in the 70S ribosome. This Shewanella loihica (strain ATCC BAA-1088 / PV-4) protein is Large ribosomal subunit protein uL14.